A 160-amino-acid polypeptide reads, in one-letter code: Probable dihydroneopterin aldolase 3 (160 aa).

Residues Glu59, Phe91, and 110 to 111 (YE) contribute to the substrate site. Lys137 acts as the Proton donor/acceptor in catalysis.

This sequence belongs to the DHNA family. In terms of assembly, homooctamer. Forms a hollow cylinder assembled from two ring-shaped tetramers. In terms of tissue distribution, expressed at very low levels in siliques.

The enzyme catalyses 7,8-dihydroneopterin = 6-hydroxymethyl-7,8-dihydropterin + glycolaldehyde. It participates in cofactor biosynthesis; tetrahydrofolate biosynthesis; 2-amino-4-hydroxy-6-hydroxymethyl-7,8-dihydropteridine diphosphate from 7,8-dihydroneopterin triphosphate: step 3/4. In terms of biological role, catalyzes the conversion of 7,8-dihydroneopterin into 6-hydroxymethyl-7,8-dihydropterin, a biosynthetic precursor of the vitamin tetrahydrofolate. Can use L-threo-dihydroneopterin and D-erythro-dihydroneopterin as substrates for the formation of 6-hydroxymethyldihydropterin, but it can also catalyze the epimerization of carbon 2' of dihydroneopterin and dihydromonapterin. The protein is Probable dihydroneopterin aldolase 3 of Arabidopsis thaliana (Mouse-ear cress).